The chain runs to 520 residues: Cobyric acid synthase (520 aa).

The GATase cobBQ-type domain occupies 254-465 (ELDIAVVRLP…IHGILDNDGL (212 aa)). Cysteine 335 acts as the Nucleophile in catalysis. Histidine 457 is an active-site residue.

It belongs to the CobB/CobQ family. CobQ subfamily.

The protein operates within cofactor biosynthesis; adenosylcobalamin biosynthesis. Its function is as follows. Catalyzes amidations at positions B, D, E, and G on adenosylcobyrinic A,C-diamide. NH(2) groups are provided by glutamine, and one molecule of ATP is hydrogenolyzed for each amidation. The sequence is that of Cobyric acid synthase from Sorangium cellulosum (strain So ce56) (Polyangium cellulosum (strain So ce56)).